The primary structure comprises 208 residues: Probable GTP-binding protein EngB (208 aa).

The EngB-type G domain occupies 23–205 (LTSEMVVLGR…RQTLLKHLLT (183 aa)). GTP contacts are provided by residues 31 to 38 (GRSNVGKS), 57 to 61 (GKTRL), 84 to 87 (DLPG), 154 to 157 (TKFD), and 182 to 184 (FNA). Mg(2+) is bound by residues S38 and T59.

The protein belongs to the TRAFAC class TrmE-Era-EngA-EngB-Septin-like GTPase superfamily. EngB GTPase family. The cofactor is Mg(2+).

Functionally, necessary for normal cell division and for the maintenance of normal septation. This chain is Probable GTP-binding protein EngB, found in Helicobacter pylori (strain ATCC 700392 / 26695) (Campylobacter pylori).